The primary structure comprises 89 residues: Small ribosomal subunit protein uS15 (89 aa).

Belongs to the universal ribosomal protein uS15 family. As to quaternary structure, part of the 30S ribosomal subunit. Forms a bridge to the 50S subunit in the 70S ribosome, contacting the 23S rRNA.

Functionally, one of the primary rRNA binding proteins, it binds directly to 16S rRNA where it helps nucleate assembly of the platform of the 30S subunit by binding and bridging several RNA helices of the 16S rRNA. Its function is as follows. Forms an intersubunit bridge (bridge B4) with the 23S rRNA of the 50S subunit in the ribosome. The protein is Small ribosomal subunit protein uS15 of Lysinibacillus sphaericus (strain C3-41).